Here is a 142-residue protein sequence, read N- to C-terminus: Holo-[acyl-carrier-protein] synthase (142 aa).

2 residues coordinate Mg(2+): aspartate 8 and glutamate 57.

Belongs to the P-Pant transferase superfamily. AcpS family. Requires Mg(2+) as cofactor.

It localises to the cytoplasm. The enzyme catalyses apo-[ACP] + CoA = holo-[ACP] + adenosine 3',5'-bisphosphate + H(+). In terms of biological role, transfers the 4'-phosphopantetheine moiety from coenzyme A to a Ser of acyl-carrier-protein. This Ruegeria sp. (strain TM1040) (Silicibacter sp.) protein is Holo-[acyl-carrier-protein] synthase.